The following is a 954-amino-acid chain: Alpha-xylosidase BoGH31A (954 aa).

Positions 1-20 are cleaved as a signal peptide; it reads MIMNMKNIFYCLLPGLLLGA. C21 carries N-palmitoyl cysteine lipidation. The S-diacylglycerol cysteine moiety is linked to residue C21. A PA14 domain is found at 227 to 366; sequence TGQEGALTGT…NPEEQGKQSW (140 aa). Active-site residues include D553 and E556. Catalysis depends on D630, which acts as the Proton donor.

The protein belongs to the glycosyl hydrolase 31 family.

It is found in the cell inner membrane. It catalyses the reaction Hydrolysis of terminal, non-reducing alpha-D-xylose residues with release of alpha-D-xylose.. It functions in the pathway glucan metabolism; xyloglucan degradation. Catalyzes the liberation of alpha-xylose from the non-reducing terminal glucose of xyloglucan oligosaccharides in xyloglucan degradation, converting the 'X' to 'G' units. The protein is Alpha-xylosidase BoGH31A of Bacteroides ovatus (strain ATCC 8483 / DSM 1896 / JCM 5824 / BCRC 10623 / CCUG 4943 / NCTC 11153).